The sequence spans 301 residues: MKIGVIMGGISSEREISLQSGKSIIENINKEKYEVLPIVIDKKEDIINKSKGIDFALLALHGQFGEDGTVQSVLQTLGIPYSGCGPLSSAMCMDKDVSKSVLEANGIRTAPWINLRKGDNIDFNKINELGYPVVVKPTHGGSSVATFIVKEEKEIENCVSEAFKWDSEVMIEKFIKGDEITCPVYNNKMLPVIAIKPKAEFFDFTSKYQDGGAEEIVVELEAELHKEVEKMALETYKALKCEVYSRVDMIVTEEGVPYILEINTLPGMTKNSLIPKSAAALNIGFSELIDMIIQDSLKISR.

In terms of domain architecture, ATP-grasp spans 99–294 (KSVLEANGIR…FSELIDMIIQ (196 aa)). Residue 126–181 (INELGYPVVVKPTHGGSSVATFIVKEEKEIENCVSEAFKWDSEVMIEKFIKGDEIT) coordinates ATP. Positions 248, 261, and 263 each coordinate Mg(2+).

It belongs to the D-alanine--D-alanine ligase family. The cofactor is Mg(2+). Mn(2+) serves as cofactor.

It localises to the cytoplasm. The catalysed reaction is 2 D-alanine + ATP = D-alanyl-D-alanine + ADP + phosphate + H(+). Its pathway is cell wall biogenesis; peptidoglycan biosynthesis. Functionally, cell wall formation. In Clostridium beijerinckii (strain ATCC 51743 / NCIMB 8052) (Clostridium acetobutylicum), this protein is D-alanine--D-alanine ligase.